Here is a 236-residue protein sequence, read N- to C-terminus: uncharacterized protein (236 aa).

3 disordered regions span residues 1–48, 67–122, and 134–192; these read MHLR…RTFS, VHTP…HSPR, and KLHP…PNNT. Positions 85 to 99 are enriched in basic residues; the sequence is RAHRTAKHPARRQSC. Residues 180–189 show a composition bias toward pro residues; that stretch reads PSPAIKPSPP.

This is an uncharacterized protein from Encephalitozoon cuniculi (strain GB-M1) (Microsporidian parasite).